The primary structure comprises 786 residues: DENN domain-containing protein 1C (786 aa).

In terms of domain architecture, uDENN spans 13-158; the sequence is FDWFFEAGCP…MDSSITVRSE (146 aa). The 137-residue stretch at 182–318 folds into the cDENN domain; it reads SLPSIPENRN…VVSLLRLRLR (137 aa). Residues 320-398 enclose the dDENN domain; it reads VALSPGEGVS…ESRLEKLNAG (79 aa). Residues 401-405 carry the FXDXF motif motif; the sequence is FSDQF. The segment at 481 to 553 is disordered; it reads KDGDSGLQRG…LSPGDTQNPW (73 aa). The span at 527-541 shows a compositional bias: basic and acidic residues; that stretch reads LKTEEGPSEPLRERS. The segment covering 542 to 552 has biased composition (polar residues); that stretch reads PTLSPGDTQNP. Serine 565 carries the post-translational modification Phosphoserine. Positions 570-579 match the Clathrin box motif; it reads DLLSEILDSL. Disordered stretches follow at residues 653 to 741 and 762 to 786; these read YSKN…QPPQ and SHVS…CFEN. A compositionally biased stretch (low complexity) spans 657-675; the sequence is SCSQPFQQSPPSQGDPGPS. Over residues 706–740 the composition is skewed to polar residues; it reads LLVSTEPNSDAVQRLQSISSPSCSHSAENPRNQPP. Basic and acidic residues predominate over residues 770–786; it reads PQDKQPRVADLKKCFEN.

In terms of assembly, exhibits low nucleotide-independent RAB35-binding activity. Interacts with clathrin heavy chain/CLTC and with AP2A2, but not with AP2B1.

It localises to the cytoplasm. The protein localises to the cytosol. Its subcellular location is the cytoplasmic vesicle. The protein resides in the clathrin-coated vesicle. Functionally, guanine nucleotide exchange factor (GEF) which may activate RAB8A, RAB13 and RAB35. Promotes the exchange of GDP to GTP, converting inactive GDP-bound Rab proteins into their active GTP-bound form. This Mus musculus (Mouse) protein is DENN domain-containing protein 1C (Dennd1c).